The chain runs to 71 residues: Small, acid-soluble spore protein I (71 aa).

It belongs to the SspI family.

It localises to the spore core. The sequence is that of Small, acid-soluble spore protein I from Geobacillus sp. (strain WCH70).